A 146-amino-acid chain; its full sequence is Hemoglobin subunit beta (146 aa).

At Val-1 the chain carries N-acetylvaline. The Globin domain maps to 2–146 (HLTAEEKAAV…VATALAHKYH (145 aa)). Thr-12 carries the phosphothreonine modification. The residue at position 44 (Ser-44) is a Phosphoserine. Lys-59 is subject to N6-acetyllysine. His-63 provides a ligand contact to heme b. Residue Lys-82 is modified to N6-acetyllysine. Residue His-92 participates in heme b binding. S-nitrosocysteine is present on Cys-93. Lys-144 is subject to N6-acetyllysine.

Belongs to the globin family. Heterotetramer of two alpha chains and two beta chains. Red blood cells.

Involved in oxygen transport from the lung to the various peripheral tissues. In Mustela lutreola (European mink), this protein is Hemoglobin subunit beta (HBB).